Here is a 132-residue protein sequence, read N- to C-terminus: Agouti-signaling protein (132 aa).

Positions 1–22 (MDVTRLLLATLLVFLCFFTAYS) are cleaved as a signal peptide. A glycan (N-linked (GlcNAc...) asparagine) is linked at N39. Over residues 61 to 79 (EISRKEAEKKRSSKKEASM) the composition is skewed to basic and acidic residues. A disordered region spans residues 61 to 87 (EISRKEAEKKRSSKKEASMKKVARPRT). Cystine bridges form between C93–C108, C100–C114, C107–C125, C111–C132, and C116–C123. One can recognise an Agouti domain in the interval 93 to 132 (CVATRDSCKPPAPACCDPCASCQCRFFRSACSCRVLSLNC).

It is found in the secreted. In terms of biological role, involved in the regulation of melanogenesis. The binding of ASP to MC1R precludes alpha-MSH initiated signaling and thus blocks production of cAMP, leading to a down-regulation of eumelanogenesis (brown/black pigment) and thus increasing synthesis of pheomelanin (yellow/red pigment). The chain is Agouti-signaling protein (ASIP) from Macaca fascicularis (Crab-eating macaque).